We begin with the raw amino-acid sequence, 367 residues long: Phosphoribosylaminoimidazole-succinocarboxamide synthase (367 aa).

The protein belongs to the SAICAR synthetase family.

It carries out the reaction 5-amino-1-(5-phospho-D-ribosyl)imidazole-4-carboxylate + L-aspartate + ATP = (2S)-2-[5-amino-1-(5-phospho-beta-D-ribosyl)imidazole-4-carboxamido]succinate + ADP + phosphate + 2 H(+). It participates in purine metabolism; IMP biosynthesis via de novo pathway; 5-amino-1-(5-phospho-D-ribosyl)imidazole-4-carboxamide from 5-amino-1-(5-phospho-D-ribosyl)imidazole-4-carboxylate: step 1/2. This Aliivibrio fischeri (strain ATCC 700601 / ES114) (Vibrio fischeri) protein is Phosphoribosylaminoimidazole-succinocarboxamide synthase.